A 165-amino-acid chain; its full sequence is Phosphopantetheine adenylyltransferase (165 aa).

Ser9 is a substrate binding site. ATP-binding positions include 9–10 (SF) and His17. Positions 41, 73, and 87 each coordinate substrate. Residues 88 to 90 (GLR), Glu98, and 123 to 129 (FTLLSSS) contribute to the ATP site.

The protein belongs to the bacterial CoaD family. Homohexamer. Requires Mg(2+) as cofactor.

Its subcellular location is the cytoplasm. The enzyme catalyses (R)-4'-phosphopantetheine + ATP + H(+) = 3'-dephospho-CoA + diphosphate. Its pathway is cofactor biosynthesis; coenzyme A biosynthesis; CoA from (R)-pantothenate: step 4/5. In terms of biological role, reversibly transfers an adenylyl group from ATP to 4'-phosphopantetheine, yielding dephospho-CoA (dPCoA) and pyrophosphate. This chain is Phosphopantetheine adenylyltransferase, found in Herpetosiphon aurantiacus (strain ATCC 23779 / DSM 785 / 114-95).